Consider the following 114-residue polypeptide: Flagellar hook-basal body complex protein FliE (114 aa).

It belongs to the FliE family.

It localises to the bacterial flagellum basal body. The sequence is that of Flagellar hook-basal body complex protein FliE from Desulfitobacterium hafniense (strain Y51).